A 275-amino-acid polypeptide reads, in one-letter code: Large ribosomal subunit protein uL2 (275 aa).

Residues 223 to 275 (VAMNPVDHPHGGGEGRTSGGRHPVSPWGQPTKGYKTRSNKRTDKYIVRRRNKK) are disordered.

Belongs to the universal ribosomal protein uL2 family. As to quaternary structure, part of the 50S ribosomal subunit. Forms a bridge to the 30S subunit in the 70S ribosome.

Functionally, one of the primary rRNA binding proteins. Required for association of the 30S and 50S subunits to form the 70S ribosome, for tRNA binding and peptide bond formation. It has been suggested to have peptidyltransferase activity; this is somewhat controversial. Makes several contacts with the 16S rRNA in the 70S ribosome. The sequence is that of Large ribosomal subunit protein uL2 from Shewanella piezotolerans (strain WP3 / JCM 13877).